Reading from the N-terminus, the 197-residue chain is UDP-N-acetylglucosamine transferase subunit alg13 (197 aa).

The interval 174–197 is disordered; that stretch reads VRGPDQKNQPTLEQVMSDEMGFVD.

The protein belongs to the glycosyltransferase 28 family. Heterodimer with alg14 to form a functional enzyme.

The protein localises to the endoplasmic reticulum. It carries out the reaction an N-acetyl-alpha-D-glucosaminyl-diphospho-di-trans,poly-cis-dolichol + UDP-N-acetyl-alpha-D-glucosamine = an N,N'-diacetylchitobiosyl-diphospho-di-trans,poly-cis-dolichol + UDP + H(+). In terms of biological role, involved in protein N-glycosylation. Essential for the second step of the dolichol-linked oligosaccharide pathway. This is UDP-N-acetylglucosamine transferase subunit alg13 (alg13) from Aspergillus fumigatus (strain ATCC MYA-4609 / CBS 101355 / FGSC A1100 / Af293) (Neosartorya fumigata).